Here is a 200-residue protein sequence, read N- to C-terminus: GTP cyclohydrolase 1 (200 aa).

Zn(2+)-binding residues include Cys-87, His-90, and Cys-158.

The protein belongs to the GTP cyclohydrolase I family. In terms of assembly, toroid-shaped homodecamer, composed of two pentamers of five dimers.

The enzyme catalyses GTP + H2O = 7,8-dihydroneopterin 3'-triphosphate + formate + H(+). Its pathway is cofactor biosynthesis; 7,8-dihydroneopterin triphosphate biosynthesis; 7,8-dihydroneopterin triphosphate from GTP: step 1/1. The chain is GTP cyclohydrolase 1 from Xanthomonas euvesicatoria pv. vesicatoria (strain 85-10) (Xanthomonas campestris pv. vesicatoria).